The primary structure comprises 184 residues: UPF0149 protein PputW619_5026 (184 aa).

Belongs to the UPF0149 family.

The sequence is that of UPF0149 protein PputW619_5026 from Pseudomonas putida (strain W619).